Here is a 214-residue protein sequence, read N- to C-terminus: Small ribosomal subunit protein uS5 (214 aa).

In terms of domain architecture, S5 DRBM spans 55–118 (LKYERLDVGI…RNAKLNITPV (64 aa)).

Belongs to the universal ribosomal protein uS5 family. In terms of assembly, part of the 30S ribosomal subunit. Contacts protein S4.

Functionally, with S4 and S12 plays an important role in translational accuracy. This is Small ribosomal subunit protein uS5 from Staphylothermus marinus (strain ATCC 43588 / DSM 3639 / JCM 9404 / F1).